The sequence spans 110 residues: U1-lycotoxin-Ls1kk (110 aa).

An N-terminal signal peptide occupies residues 1 to 20 (MKFVLLFGVFLVTLFSYSSA). Positions 21-44 (EMLDDFDQADEDELLSLIEKEEAR) are excised as a propeptide. Intrachain disulfides connect Cys47-Cys62, Cys54-Cys71, Cys61-Cys89, and Cys73-Cys87.

It belongs to the neurotoxin 19 (CSTX) family. 03 subfamily. In terms of tissue distribution, expressed by the venom gland.

The protein localises to the secreted. The chain is U1-lycotoxin-Ls1kk from Lycosa singoriensis (Wolf spider).